The following is a 198-amino-acid chain: Ribonuclease HII (198 aa).

The RNase H type-2 domain occupies 3–198 (FLEGGVDEAG…SWRTLRGESP (196 aa)). A divalent metal cation contacts are provided by Asp9, Glu10, and Asp104.

It belongs to the RNase HII family. It depends on Mn(2+) as a cofactor. Requires Mg(2+) as cofactor.

It localises to the cytoplasm. It carries out the reaction Endonucleolytic cleavage to 5'-phosphomonoester.. Functionally, endonuclease that specifically degrades the RNA of RNA-DNA hybrids. In Pyrobaculum neutrophilum (strain DSM 2338 / JCM 9278 / NBRC 100436 / V24Sta) (Thermoproteus neutrophilus), this protein is Ribonuclease HII.